The following is a 995-amino-acid chain: tRNA wybutosine-synthesizing protein 2/3/4 (995 aa).

A tRNA wybutosine-synthesizing protein 3 homolog region spans residues 1–212; that stretch reads MDFEKRKAAT…GFSVALASNG (212 aa). Kelch repeat units follow at residues 284–335, 336–386, 387–436, 437–486, and 488–535; these read EVIV…MVGD, FMFV…SVGT, KVYI…AYGS, QSFM…VYKH, and IGII…SILG. The interval 661–995 is tRNA wybutosine-synthesizing protein 2 homolog; sequence ERSEENNLTK…RHLVADVRCR (335 aa). S-adenosyl-L-methionine is bound by residues lysine 828 and 896 to 897; that span reads DN.

In the C-terminal section; belongs to the class I-like SAM-binding methyltransferase superfamily. TRM5/TYW2 family. The protein in the N-terminal section; belongs to the TYW3 family.

The enzyme catalyses 4-demethyl-7-[(3S)-3-amino-3-carboxypropyl]wyosine(37) in tRNA(Phe) + S-adenosyl-L-methionine = 7-[(3S)-3-amino-3-carboxypropyl]wyosine(37) in tRNA(Phe) + S-adenosyl-L-homocysteine + H(+). It carries out the reaction 4-demethylwyosine(37) in tRNA(Phe) + S-adenosyl-L-methionine = 4-demethyl-7-[(3S)-3-amino-3-carboxypropyl]wyosine(37) in tRNA(Phe) + S-methyl-5'-thioadenosine + H(+). It functions in the pathway tRNA modification; wybutosine-tRNA(Phe) biosynthesis. Functionally, S-adenosyl-L-methionine-dependent transferase that acts as a component of the wybutosine biosynthesis pathway. Wybutosine is a hyper modified guanosine with a tricyclic base found at the 3'-position adjacent to the anticodon of eukaryotic phenylalanine tRNA. The polypeptide is tRNA wybutosine-synthesizing protein 2/3/4 (Arabidopsis thaliana (Mouse-ear cress)).